A 179-amino-acid chain; its full sequence is ATP synthase subunit delta (179 aa).

It belongs to the ATPase delta chain family. F-type ATPases have 2 components, F(1) - the catalytic core - and F(0) - the membrane proton channel. F(1) has five subunits: alpha(3), beta(3), gamma(1), delta(1), epsilon(1). F(0) has three main subunits: a(1), b(2) and c(10-14). The alpha and beta chains form an alternating ring which encloses part of the gamma chain. F(1) is attached to F(0) by a central stalk formed by the gamma and epsilon chains, while a peripheral stalk is formed by the delta and b chains.

The protein localises to the cell inner membrane. F(1)F(0) ATP synthase produces ATP from ADP in the presence of a proton or sodium gradient. F-type ATPases consist of two structural domains, F(1) containing the extramembraneous catalytic core and F(0) containing the membrane proton channel, linked together by a central stalk and a peripheral stalk. During catalysis, ATP synthesis in the catalytic domain of F(1) is coupled via a rotary mechanism of the central stalk subunits to proton translocation. Its function is as follows. This protein is part of the stalk that links CF(0) to CF(1). It either transmits conformational changes from CF(0) to CF(1) or is implicated in proton conduction. This chain is ATP synthase subunit delta, found in Delftia acidovorans (strain DSM 14801 / SPH-1).